The sequence spans 211 residues: Large ribosomal subunit protein uL3 (211 aa).

Belongs to the universal ribosomal protein uL3 family. In terms of assembly, part of the 50S ribosomal subunit. Forms a cluster with proteins L14 and L19.

Its function is as follows. One of the primary rRNA binding proteins, it binds directly near the 3'-end of the 23S rRNA, where it nucleates assembly of the 50S subunit. The polypeptide is Large ribosomal subunit protein uL3 (Trichlorobacter lovleyi (strain ATCC BAA-1151 / DSM 17278 / SZ) (Geobacter lovleyi)).